The chain runs to 564 residues: Ovochymase-2 (564 aa).

Positions 1 to 22 (MLISRNKLILLLGIVFFERGKS) are cleaved as a signal peptide. A propeptide spans 23–51 (ATLSLPKAPSCGQSLVKVQPWNYFNIFSR) (activation peptide). One can recognise a Peptidase S1 domain in the interval 52–299 (ILGGSQVEKG…VLPWIHEHIQ (248 aa)). A disulfide bridge links Cys-77 with Cys-93. The Charge relay system role is filled by His-92. Asn-104 carries an N-linked (GlcNAc...) asparagine glycan. Residue Glu-119 participates in Ca(2+) binding. Asp-142 functions as the Charge relay system in the catalytic mechanism. Cystine bridges form between Cys-176–Cys-246, Cys-207–Cys-225, Cys-236–Cys-265, Cys-311–Cys-341, and Cys-365–Cys-384. The active-site Charge relay system is the Ser-240. 2 CUB domains span residues 311–421 (CSEQ…YKAL) and 431–543 (CSYL…VSFI). N-linked (GlcNAc...) asparagine glycosylation is found at Asn-415 and Asn-451. 2 cysteine pairs are disulfide-bonded: Cys-431–Cys-458 and Cys-485–Cys-506. Asn-530 is a glycosylation site (N-linked (GlcNAc...) asparagine).

It belongs to the peptidase S1 family.

It localises to the secreted. In terms of biological role, may be required for sperm ADAM3 processing and consequential sperm fertilizing ability. In vitro, has an endopeptidase activity. The sequence is that of Ovochymase-2 from Homo sapiens (Human).